The primary structure comprises 238 residues: tRNA (guanine-N(7)-)-methyltransferase (238 aa).

The segment covering 1–12 has biased composition (polar residues); that stretch reads MTDTAENQTPND. The interval 1–20 is disordered; sequence MTDTAENQTPNDRQAGHPRS. S-adenosyl-L-methionine-binding residues include Glu-70, Asp-95, Asp-122, and Asp-145. Residue Asp-145 is part of the active site. Residues Lys-149, Asp-181, and 216–219 each bind substrate; that span reads TKFE.

Belongs to the class I-like SAM-binding methyltransferase superfamily. TrmB family.

It carries out the reaction guanosine(46) in tRNA + S-adenosyl-L-methionine = N(7)-methylguanosine(46) in tRNA + S-adenosyl-L-homocysteine. The protein operates within tRNA modification; N(7)-methylguanine-tRNA biosynthesis. Its function is as follows. Catalyzes the formation of N(7)-methylguanine at position 46 (m7G46) in tRNA. This Neisseria gonorrhoeae (strain NCCP11945) protein is tRNA (guanine-N(7)-)-methyltransferase.